The sequence spans 367 residues: UDP-galactopyranose mutase (367 aa).

FAD-binding positions include F12, 31-32 (EK), N39, and 56-57 (HI). UDP-alpha-D-galactose is bound at residue F12. UDP-alpha-D-galactose-binding residues include N80, T152, W156, and Y181. 212 to 213 (DF) lines the FAD pocket. N268, R278, and Y311 together coordinate UDP-alpha-D-galactose. FAD is bound at residue R340. Position 346 (Y346) interacts with UDP-alpha-D-galactose. 347-352 (YDMHQV) provides a ligand contact to FAD.

As to quaternary structure, homodimer. The cofactor is FAD.

The catalysed reaction is UDP-alpha-D-galactose = UDP-alpha-D-galactofuranose. Its pathway is bacterial outer membrane biogenesis; lipopolysaccharide biosynthesis. Its function is as follows. Catalyzes the interconversion through a 2-keto intermediate of uridine diphosphogalactopyranose (UDP-GalP) into uridine diphosphogalactofuranose (UDP-GalF). The sequence is that of UDP-galactopyranose mutase (glf) from Escherichia coli (strain K12).